Here is a 147-residue protein sequence, read N- to C-terminus: MALQRTQAFLLLLLLTLLGLGLVQPSYGQDRMYQRFLRQHVDPDETGGNDSYCNLMMQRRKMTSHQCKRFNTFIHEDLWNIRSICSTTNIQCKNGQMNCHEGVVRVTDCRETGSSRAPNCRYRAKASTRRVVIACEGNPEVPVHFDK.

The N-terminal stretch at 1 to 28 is a signal peptide; the sequence is MALQRTQAFLLLLLLTLLGLGLVQPSYG. The residue at position 29 (Q29) is a Pyrrolidone carboxylic acid. Positions 35, 40, 68, 71, and 72 each coordinate dUMP. H40 acts as the Proton acceptor in catalysis. Disulfide bonds link C53–C109, C67–C120, C85–C135, and C92–C99. The active-site Proton donor is H144. F145 provides a ligand contact to dUMP.

The protein belongs to the pancreatic ribonuclease family.

The protein resides in the secreted. Its function is as follows. Cleaves preferentially after uridine bases. Has antimicrobial activity against uropathogenic E.coli (UPEC). Probably contributes to urinary tract sterility. In Bos taurus (Bovine), this protein is Ribonuclease 4 (RNASE4).